Reading from the N-terminus, the 635-residue chain is UvrABC system protein C (635 aa).

The 78-residue stretch at 20 to 97 folds into the GIY-YIG domain; that stretch reads ERSGVYRMFD…IKKFQPKFNI (78 aa). In terms of domain architecture, UVR spans 207–242; sequence KELQENLSKKMEELSEQMRFEEAAEIRDRIKALSYV.

The protein belongs to the UvrC family. As to quaternary structure, interacts with UvrB in an incision complex.

It localises to the cytoplasm. The UvrABC repair system catalyzes the recognition and processing of DNA lesions. UvrC both incises the 5' and 3' sides of the lesion. The N-terminal half is responsible for the 3' incision and the C-terminal half is responsible for the 5' incision. The protein is UvrABC system protein C of Rickettsia bellii (strain RML369-C).